A 217-amino-acid polypeptide reads, in one-letter code: Ras-related protein RIC2 (217 aa).

GTP-binding positions include 21 to 28 (GDSGVGKS), 69 to 73 (DTAGQ), and 127 to 130 (NKSD). Residues C214 and C215 are each lipidated (S-geranylgeranyl cysteine).

The protein belongs to the small GTPase superfamily. Rab family.

The protein localises to the cell membrane. In terms of biological role, possesses GTPase activity. The sequence is that of Ras-related protein RIC2 (RIC2) from Oryza sativa subsp. japonica (Rice).